A 92-amino-acid chain; its full sequence is Small ribosomal subunit protein uS17 (92 aa).

Belongs to the universal ribosomal protein uS17 family. Part of the 30S ribosomal subunit.

In terms of biological role, one of the primary rRNA binding proteins, it binds specifically to the 5'-end of 16S ribosomal RNA. This is Small ribosomal subunit protein uS17 from Cupriavidus necator (strain ATCC 17699 / DSM 428 / KCTC 22496 / NCIMB 10442 / H16 / Stanier 337) (Ralstonia eutropha).